The chain runs to 553 residues: Putative transport protein YidE (553 aa).

The next 5 helical transmembrane spans lie at 4–24 (IALT…IGNV), 28–48 (GIGL…HFVS), 65–85 (FGLI…FFAS), 95–115 (LFAV…HKLF), and 158–178 (MSYA…MWML). 2 consecutive RCK C-terminal domains span residues 191-276 (QQHE…VIGQ) and 279-361 (DTSL…VLGN). The next 6 helical transmembrane spans lie at 371–391 (MLPV…PVFV), 393–413 (GFPA…ALIL), 431–448 (NLAL…VVGL), 464–484 (LSWI…VGIL), 493–513 (YLTM…LAFA), and 533–553 (LVMF…WSIG).

It belongs to the AAE transporter (TC 2.A.81) family. YidE subfamily.

It is found in the cell membrane. The sequence is that of Putative transport protein YidE from Shigella sonnei (strain Ss046).